Reading from the N-terminus, the 75-residue chain is Cytochrome c oxidase subunit 6C (75 aa).

The Mitochondrial matrix portion of the chain corresponds to 1 to 13 (MAPEVLPKPQMRG). The chain crosses the membrane as a helical span at residues 14 to 54 (LLAKRLRFHMVTAFVLSLGVAALYKFRVADKRKKAYADFYR). Topologically, residues 55–75 (NYDAMKDFEEMRKAGIFQSVK) are mitochondrial intermembrane.

This sequence belongs to the cytochrome c oxidase subunit 6c family. In terms of assembly, component of the cytochrome c oxidase (complex IV, CIV), a multisubunit enzyme composed of 14 subunits. The complex is composed of a catalytic core of 3 subunits MT-CO1, MT-CO2 and MT-CO3, encoded in the mitochondrial DNA, and 11 supernumerary subunits COX4I, COX5A, COX5B, COX6A, COX6B, COX6C, COX7A, COX7B, COX7C, COX8 and NDUFA4, which are encoded in the nuclear genome. The complex exists as a monomer or a dimer and forms supercomplexes (SCs) in the inner mitochondrial membrane with NADH-ubiquinone oxidoreductase (complex I, CI) and ubiquinol-cytochrome c oxidoreductase (cytochrome b-c1 complex, complex III, CIII), resulting in different assemblies (supercomplex SCI(1)III(2)IV(1) and megacomplex MCI(2)III(2)IV(2)).

The protein localises to the mitochondrion inner membrane. It functions in the pathway energy metabolism; oxidative phosphorylation. Its function is as follows. Component of the cytochrome c oxidase, the last enzyme in the mitochondrial electron transport chain which drives oxidative phosphorylation. The respiratory chain contains 3 multisubunit complexes succinate dehydrogenase (complex II, CII), ubiquinol-cytochrome c oxidoreductase (cytochrome b-c1 complex, complex III, CIII) and cytochrome c oxidase (complex IV, CIV), that cooperate to transfer electrons derived from NADH and succinate to molecular oxygen, creating an electrochemical gradient over the inner membrane that drives transmembrane transport and the ATP synthase. Cytochrome c oxidase is the component of the respiratory chain that catalyzes the reduction of oxygen to water. Electrons originating from reduced cytochrome c in the intermembrane space (IMS) are transferred via the dinuclear copper A center (CU(A)) of subunit 2 and heme A of subunit 1 to the active site in subunit 1, a binuclear center (BNC) formed by heme A3 and copper B (CU(B)). The BNC reduces molecular oxygen to 2 water molecules using 4 electrons from cytochrome c in the IMS and 4 protons from the mitochondrial matrix. This is Cytochrome c oxidase subunit 6C (COX6C) from Trachypithecus cristatus (Silvered leaf-monkey).